A 124-amino-acid chain; its full sequence is MALNKEDILTWLEGAKTMEVVELVTAIEEKFGVTAAVATSVGGAASTGSTDSEEQTEFDVILMSFGDSKINVIKEVRSITGLGLGEAKALVESAPKAIKEGLSKSDAEELKKKLEAVGAKVEVK.

The protein belongs to the bacterial ribosomal protein bL12 family. In terms of assembly, homodimer. Part of the ribosomal stalk of the 50S ribosomal subunit. Forms a multimeric L10(L12)X complex, where L10 forms an elongated spine to which 2 to 4 L12 dimers bind in a sequential fashion. Binds GTP-bound translation factors.

Its function is as follows. Forms part of the ribosomal stalk which helps the ribosome interact with GTP-bound translation factors. Is thus essential for accurate translation. This Borreliella afzelii (strain PKo) (Borrelia afzelii) protein is Large ribosomal subunit protein bL12.